The sequence spans 26 residues: Glycyl-poneratoxin (26 aa).

The residue at position 25 (R25) is an Arginine amide; in delta-paraponeritoxin-Pc1a.

In terms of processing, the glycine-PoTx is a non-amidated form of poneratoxin, with an extra-Gly at C-terminus. This loss of amidation does not alter toxin activity on Nav1.7/SCN9A. Expressed by the venom gland.

It localises to the secreted. Functionally, toxin that causes pain in vertebrates by targeting tetrodotoxin (TTX)-sensitive sodium channels in peripheral sensory neurons. Also blocks synaptic transmission and stimulates smooth muscle contraction. Converts the normally rapidly activating and inactivating sodium channel current into one that does not inactivate. Is active on both Nav1.6/SCN8A and Nav1.7/SCN9A sodium channels, with a much potent activity on Nav1.6/SCN8A (EC(50)=97 nM on human channels) than on Nav1.7/SCN9A (EC(50)=2.3 uM on human and EC(50)=1.8 uM on mouse channels). On these channels, causes a sustained current, a reduction in peak current amplitude and a hyperpolarising shift. Modulates Nav1.7/SCN9A in a non-competitive manner with TTX or tetracaine. Toxin-induced persistant current is very slowly reversible with repeated wash steps over 30 minutes. In vivo, shallow intraplantar injection in mice causes immediate, long-lasting and near-maximal nocifensive behaviors, which decrease with coinjection of TTX. When tested on insects, causes paralysis but not mortality at high doses. The protein is Glycyl-poneratoxin of Paraponera clavata (Bullet ant).